The chain runs to 194 residues: Protein cholesin (194 aa).

Positions 1 to 83 (MAKQKRKVPE…RKKEERQRLR (83 aa)) are disordered. A phosphoserine mark is found at serine 23 and serine 59. Over residues 61–83 (EEQRVLERKLKKERKKEERQRLR) the composition is skewed to basic and acidic residues. Phosphoserine occurs at positions 97 and 175.

In terms of tissue distribution, secreted from the instestine, secretion is induced by feeding and cholesterol absorption.

Its subcellular location is the secreted. Functionally, hormone secreted from the intestine in response to cholesterol, where it acts to inhibit cholesterol synthesis in the liver and VLDL secretion,leading to a reduction in circulating cholesterol levels. Acts through binding to its receptor, GPR146. The polypeptide is Protein cholesin (Homo sapiens (Human)).